The following is a 129-amino-acid chain: UPF0102 protein CPS_4433 (129 aa).

This sequence belongs to the UPF0102 family.

In Colwellia psychrerythraea (strain 34H / ATCC BAA-681) (Vibrio psychroerythus), this protein is UPF0102 protein CPS_4433.